Consider the following 1323-residue polypeptide: Lysine-specific demethylase 3A (1323 aa).

Disordered stretches follow at residues 255–287 (TRTG…PSMC), 307–337 (ATPS…PQGC), and 385–416 (SEPK…GLPK). Residue Ser264 is modified to Phosphoserine. Composition is skewed to polar residues over residues 266–283 (ENNG…SEAS) and 307–327 (ATPS…NSPP). Ser325 carries the phosphoserine modification. The residue at position 446 (Ser446) is a Phosphoserine. Disordered regions lie at residues 468-487 (AEKK…LKET) and 495-517 (SCCT…LTDP). Composition is skewed to polar residues over residues 477-486 (LGSQSQNLKE) and 495-507 (SCCT…TQTP). The segment at 662–687 (CDVCDTTIFNLHWVCPRCGFGVCVDC) adopts a C6-type zinc-finger fold. Positions 885–889 (LRNLL) match the LXXLL motif motif. The residue at position 895 (Lys895) is an N6-acetyllysine. Positions 1060–1283 (MPSRFDDLMA…HCFWLTQEFR (224 aa)) constitute a JmjC domain. Fe cation-binding residues include His1122, Asp1124, and His1251.

The protein belongs to the JHDM2 histone demethylase family. Interacts with VRK1. It depends on Fe(2+) as a cofactor. In terms of tissue distribution, highly expressed in testis (at protein level). Also expressed at high levels in tissues responsive to sympathetic nerve activity such as brown adipose tissue and skeletal muscle.

It localises to the cytoplasm. The protein resides in the nucleus. The catalysed reaction is N(6),N(6)-dimethyl-L-lysyl(9)-[histone H3] + 2 2-oxoglutarate + 2 O2 = L-lysyl(9)-[histone H3] + 2 formaldehyde + 2 succinate + 2 CO2. Its function is as follows. Histone demethylase that specifically demethylates 'Lys-9' of histone H3, thereby playing a central role in histone code. Preferentially demethylates mono- and dimethylated H3 'Lys-9' residue, with a preference for dimethylated residue, while it has weak or no activity on trimethylated H3 'Lys-9'. Demethylation of Lys residue generates formaldehyde and succinate. Involved in hormone-dependent transcriptional activation, by participating in recruitment to androgen-receptor target genes, resulting in H3 'Lys-9' demethylation and transcriptional activation. Involved in spermatogenesis by regulating expression of target genes such as PRM1 and TNP1 which are required for packaging and condensation of sperm chromatin. Involved in obesity resistance through regulation of metabolic genes such as PPARA and UCP1. The protein is Lysine-specific demethylase 3A (Kdm3a) of Mus musculus (Mouse).